A 309-amino-acid chain; its full sequence is Oxygen-dependent coproporphyrinogen-III oxidase (309 aa).

Ser94 provides a ligand contact to substrate. 2 residues coordinate a divalent metal cation: His98 and His108. The active-site Proton donor is His108. Residue 110-112 coordinates substrate; the sequence is NVR. A divalent metal cation is bound by residues His147 and His177. The important for dimerization stretch occupies residues 242–277; sequence YVEFNLVWDRGTLFGLQTGGRTESILMSLPPLVRWE. Residue 260–262 participates in substrate binding; sequence GGR.

It belongs to the aerobic coproporphyrinogen-III oxidase family. As to quaternary structure, homodimer. The cofactor is a divalent metal cation.

It localises to the cytoplasm. The catalysed reaction is coproporphyrinogen III + O2 + 2 H(+) = protoporphyrinogen IX + 2 CO2 + 2 H2O. Its pathway is porphyrin-containing compound metabolism; protoporphyrin-IX biosynthesis; protoporphyrinogen-IX from coproporphyrinogen-III (O2 route): step 1/1. In terms of biological role, involved in the heme biosynthesis. Catalyzes the aerobic oxidative decarboxylation of propionate groups of rings A and B of coproporphyrinogen-III to yield the vinyl groups in protoporphyrinogen-IX. The chain is Oxygen-dependent coproporphyrinogen-III oxidase from Yersinia pestis bv. Antiqua (strain Antiqua).